The sequence spans 440 residues: Endoplasmic reticulum junction formation protein lunapark (440 aa).

The Cytoplasmic segment spans residues 1–45 (MGALLAKWRAKPSTVEVLEKMEKDIQSLEEFRDKNQKLRKIWVAR). The stretch at 16–40 (EVLEKMEKDIQSLEEFRDKNQKLRK) forms a coiled coil. A helical membrane pass occupies residues 46–66 (LFFYSTILYILTSLTVYLWYL). The Lumenal portion of the chain corresponds to 67–77 (PGGMTARLLTT). Residues 78 to 98 (LLFLLFPVLIWFVRTLLILWF) form a helical membrane-spanning segment. Residues 99–440 (SRRTERNNDA…ESEESFMETE (342 aa)) lie on the Cytoplasmic side of the membrane. The stretch at 100–128 (RRTERNNDALELLKAEKKKILEEVMEKET) forms a coiled coil. Residues 149-169 (LELPVPGPPITPRPGQDLRQR) form a disordered region. Position 159 is a phosphothreonine (Thr-159). Phosphoserine is present on residues Ser-177, Ser-179, Ser-188, and Ser-192. Thr-198 carries the post-translational modification Phosphothreonine. The disordered stretch occupies residues 202 to 247 (QRDTSAPGGPPERSVQPTPQSNILQRRPGSPATAVSGMALHPPGPP). Residues Ser-206 and Ser-215 each carry the phosphoserine modification. Positions 216–225 (VQPTPQSNIL) are enriched in polar residues. The residue at position 219 (Thr-219) is a Phosphothreonine. Residues Ser-222 and Ser-231 each carry the phosphoserine modification. The C4-type; plays a role in ER morphology zinc-finger motif lies at 280–305 (CQQCFSHNGMALKEEFEYVAFRCAYC). The segment at 316-440 (PQAPRLQEIS…ESEESFMETE (125 aa)) is disordered. Ser-325 is subject to Phosphoserine. A compositionally biased stretch (polar residues) spans 334–343 (DSQGSVNTLQ). Acidic residues-rich tracts occupy residues 370-411 (QAIE…DDTE) and 431-440 (ESEESFMETE).

This sequence belongs to the lunapark family. As to quaternary structure, homodimer; homodimerization requires the C4-type zinc finger motif and decreases during mitosis in a phosphorylation-dependent manner. Post-translationally, phosphorylated. Phosphorylation at Thr-159 and Ser-325 occurs during interphase. Phosphorylation at Ser-177, Ser-179, Ser-188, Ser-192, Thr-198, Ser-206, Ser-215, Thr-219, Ser-222 and Ser-231 occurs during mitosis; these phosphorylations reduce both its homodimerization and the ER three-way tubular junction formation.

It localises to the endoplasmic reticulum membrane. Its function is as follows. Endoplasmic reticulum (ER)-shaping membrane protein that plays a role in determining ER morphology. Involved in the stabilization of nascent three-way ER tubular junctions within the ER network. May also play a role as a curvature-stabilizing protein within three-way ER tubular junction network. The chain is Endoplasmic reticulum junction formation protein lunapark (lnpk) from Xenopus laevis (African clawed frog).